The chain runs to 1018 residues: Pleckstrin homology domain-containing family M member 2 (1018 aa).

Position 1 is an N-acetylmethionine (Met-1). The interaction with KIF5B stretch occupies residues 1-289 (MEPREVKDRI…PDQPDACTEL (289 aa)). The RUN domain maps to 36–158 (RNHDKVLQRL…IRFDLDLDAP (123 aa)). 5 disordered regions span residues 210 to 367 (SAIA…SSEL), 407 to 440 (TWCSHADPPEQSFRAGSPGEAPEKPPFCDFSEGL), 452 to 520 (ESPS…DSQL), 526 to 545 (EPLVSQEPVPEPVSQPEPGT), and 555 to 583 (DQPSPCLSSAEDSGVEEGQGSPSEMTHPS). Residues 230–245 (STASDLTSSKTSTKSP) are compositionally biased toward low complexity. A compositionally biased stretch (polar residues) spans 258 to 270 (ETASSDTTPVHTT). The span at 294 to 306 (VTKKKKIGKKKKT) shows a compositional bias: basic residues. Polar residues-rich tracts occupy residues 316-325 (HPTSSQQKCG) and 347-367 (VLASPQEQGEGLSSTAGSSEL). Ser-423 is subject to Phosphoserine. Residues 770–872 (TITKEGMLHY…WMQHLCQAVS (103 aa)) form the PH domain.

Interacts with KLC2 (via TPR repeats). Interacts with KIF5B. Interacts with BORCS5. Interacts (via RUN domain) with ARL8B (GTP-bound form); PLEKHM1 and PLEKHM2 compete for interaction with ARL8B. Interacts with ARL8A.

It is found in the cytoplasm. The protein resides in the lysosome membrane. Its function is as follows. Plays a role in lysosomes movement and localization at the cell periphery acting as an effector of ARL8B. Required for ARL8B to exert its effects on lysosome location, recruits kinesin-1 to lysosomes and hence direct their movement toward microtubule plus ends. Binding to ARL8B provides a link from lysosomal membranes to plus-end-directed motility. Critical factor involved in NK cell-mediated cytotoxicity. Drives the polarization of cytolytic granules and microtubule-organizing centers (MTOCs) toward the immune synapse between effector NK lymphocytes and target cells. Required for maintenance of the Golgi apparatus organization. May play a role in membrane tubulation. In Mus musculus (Mouse), this protein is Pleckstrin homology domain-containing family M member 2.